We begin with the raw amino-acid sequence, 558 residues long: Dihydroxy-acid dehydratase (558 aa).

Aspartate 78 is a Mg(2+) binding site. Residue cysteine 119 coordinates [2Fe-2S] cluster. Mg(2+) contacts are provided by aspartate 120 and lysine 121. Lysine 121 carries the post-translational modification N6-carboxylysine. Cysteine 192 contributes to the [2Fe-2S] cluster binding site. Glutamate 446 contacts Mg(2+). The active-site Proton acceptor is serine 472.

The protein belongs to the IlvD/Edd family. In terms of assembly, homodimer. The cofactor is [2Fe-2S] cluster. Mg(2+) serves as cofactor.

It carries out the reaction (2R)-2,3-dihydroxy-3-methylbutanoate = 3-methyl-2-oxobutanoate + H2O. The catalysed reaction is (2R,3R)-2,3-dihydroxy-3-methylpentanoate = (S)-3-methyl-2-oxopentanoate + H2O. It functions in the pathway amino-acid biosynthesis; L-isoleucine biosynthesis; L-isoleucine from 2-oxobutanoate: step 3/4. It participates in amino-acid biosynthesis; L-valine biosynthesis; L-valine from pyruvate: step 3/4. Functions in the biosynthesis of branched-chain amino acids. Catalyzes the dehydration of (2R,3R)-2,3-dihydroxy-3-methylpentanoate (2,3-dihydroxy-3-methylvalerate) into 2-oxo-3-methylpentanoate (2-oxo-3-methylvalerate) and of (2R)-2,3-dihydroxy-3-methylbutanoate (2,3-dihydroxyisovalerate) into 2-oxo-3-methylbutanoate (2-oxoisovalerate), the penultimate precursor to L-isoleucine and L-valine, respectively. This chain is Dihydroxy-acid dehydratase, found in Campylobacter jejuni subsp. doylei (strain ATCC BAA-1458 / RM4099 / 269.97).